The chain runs to 225 residues: Uracil-DNA glycosylase (225 aa).

Asp-64 (proton acceptor) is an active-site residue.

This sequence belongs to the uracil-DNA glycosylase (UDG) superfamily. UNG family.

It is found in the cytoplasm. It carries out the reaction Hydrolyzes single-stranded DNA or mismatched double-stranded DNA and polynucleotides, releasing free uracil.. Functionally, excises uracil residues from the DNA which can arise as a result of misincorporation of dUMP residues by DNA polymerase or due to deamination of cytosine. This Agathobacter rectalis (strain ATCC 33656 / DSM 3377 / JCM 17463 / KCTC 5835 / VPI 0990) (Eubacterium rectale) protein is Uracil-DNA glycosylase.